The following is a 139-amino-acid chain: FLYWCH family member 2 (139 aa).

Disordered stretches follow at residues 1–36 and 86–139; these read MPQP…PRKP and EAQR…STSP. The span at 98-107 shows a compositional bias: basic and acidic residues; sequence PEQKRSKQNL. Positions 120 to 130 are enriched in low complexity; it reads VSSSSSEETTV.

In Mus musculus (Mouse), this protein is FLYWCH family member 2 (Flywch2).